Here is a 158-residue protein sequence, read N- to C-terminus: Anti-tumor lectin (158 aa).

Gln-1 bears the Blocked amino end (Gln) mark. One can recognise a Galectin domain in the interval Thr-12 to Thr-155. Asn-43, His-59, Arg-63, Asn-72, Arg-74, Trp-80, and Glu-83 together coordinate N-acetyl-alpha-neuraminyl-(2-&gt;3)-beta-D-galactosyl-(1-&gt;4)-beta-D-glucose.

Homodimer. Detected in the fruiting body.

In terms of biological role, anti-tumor lectin with DNase activity. Inhibits the growth of several tumor cell lines in vitro. Induces lymphocyte infiltration and necrosis of tumor cells in a mouse tumor model. Induces apoptosis in HeLa cells. Binds N-acetylneuraminyl lactose (N-acetyl-alpha-neuraminyl-(2-&gt;3)-beta-D-galactosyl-(1-&gt;4)-beta-D-glucose). The polypeptide is Anti-tumor lectin (Cyclocybe aegerita (Black poplar mushroom)).